The sequence spans 110 residues: UPF0367 protein sync_2587 (110 aa).

The protein belongs to the UPF0367 family.

The protein is UPF0367 protein sync_2587 of Synechococcus sp. (strain CC9311).